The primary structure comprises 503 residues: Ent-kaurene oxidase-like 5 (503 aa).

The chain crosses the membrane as a helical span at residues 8–28 (GAGGIGVAAAAAVVAATLAVV). Cys448 serves as a coordination point for heme.

Belongs to the cytochrome P450 family. Requires heme as cofactor. As to expression, expressed in roots.

The protein resides in the membrane. Its function is as follows. May hydroxylate diterpenes. This chain is Ent-kaurene oxidase-like 5, found in Oryza sativa subsp. japonica (Rice).